Consider the following 142-residue polypeptide: ATP synthase epsilon chain (142 aa).

The protein belongs to the ATPase epsilon chain family. F-type ATPases have 2 components, CF(1) - the catalytic core - and CF(0) - the membrane proton channel. CF(1) has five subunits: alpha(3), beta(3), gamma(1), delta(1), epsilon(1). CF(0) has three main subunits: a, b and c.

It localises to the cell inner membrane. Its function is as follows. Produces ATP from ADP in the presence of a proton gradient across the membrane. The protein is ATP synthase epsilon chain of Haemophilus influenzae (strain 86-028NP).